Consider the following 330-residue polypeptide: 4-hydroxythreonine-4-phosphate dehydrogenase (330 aa).

Substrate contacts are provided by H136 and T137. A divalent metal cation is bound by residues H166, H211, and H266. Residues K274, N283, and R292 each contribute to the substrate site.

The protein belongs to the PdxA family. As to quaternary structure, homodimer. Requires Zn(2+) as cofactor. The cofactor is Mg(2+). Co(2+) serves as cofactor.

The protein resides in the cytoplasm. It carries out the reaction 4-(phosphooxy)-L-threonine + NAD(+) = 3-amino-2-oxopropyl phosphate + CO2 + NADH. The protein operates within cofactor biosynthesis; pyridoxine 5'-phosphate biosynthesis; pyridoxine 5'-phosphate from D-erythrose 4-phosphate: step 4/5. In terms of biological role, catalyzes the NAD(P)-dependent oxidation of 4-(phosphooxy)-L-threonine (HTP) into 2-amino-3-oxo-4-(phosphooxy)butyric acid which spontaneously decarboxylates to form 3-amino-2-oxopropyl phosphate (AHAP). The protein is 4-hydroxythreonine-4-phosphate dehydrogenase of Erwinia tasmaniensis (strain DSM 17950 / CFBP 7177 / CIP 109463 / NCPPB 4357 / Et1/99).